Reading from the N-terminus, the 454-residue chain is Enolase (454 aa).

Glutamine 167 is a (2R)-2-phosphoglycerate binding site. Glutamate 209 serves as the catalytic Proton donor. The Mg(2+) site is built by aspartate 250, glutamate 312, and aspartate 339. (2R)-2-phosphoglycerate contacts are provided by lysine 364, arginine 393, serine 394, and lysine 415. Lysine 364 serves as the catalytic Proton acceptor.

Belongs to the enolase family. It depends on Mg(2+) as a cofactor.

It localises to the cytoplasm. It is found in the secreted. Its subcellular location is the cell surface. The enzyme catalyses (2R)-2-phosphoglycerate = phosphoenolpyruvate + H2O. The protein operates within carbohydrate degradation; glycolysis; pyruvate from D-glyceraldehyde 3-phosphate: step 4/5. Functionally, catalyzes the reversible conversion of 2-phosphoglycerate (2-PG) into phosphoenolpyruvate (PEP). It is essential for the degradation of carbohydrates via glycolysis. The sequence is that of Enolase from Mycoplasmopsis agalactiae (strain NCTC 10123 / CIP 59.7 / PG2) (Mycoplasma agalactiae).